A 341-amino-acid polypeptide reads, in one-letter code: 4-hydroxy-2-oxovalerate aldolase 2 (341 aa).

The 253-residue stretch at 8–260 folds into the Pyruvate carboxyltransferase domain; that stretch reads VTVHDMTLRD…ETGVDVAKIT (253 aa). Residue 16 to 17 participates in substrate binding; the sequence is RD. Aspartate 17 contacts Mn(2+). The active-site Proton acceptor is histidine 20. The substrate site is built by serine 170 and histidine 199. Mn(2+) contacts are provided by histidine 199 and histidine 201. Tyrosine 290 contacts substrate.

This sequence belongs to the 4-hydroxy-2-oxovalerate aldolase family.

The catalysed reaction is (S)-4-hydroxy-2-oxopentanoate = acetaldehyde + pyruvate. This chain is 4-hydroxy-2-oxovalerate aldolase 2, found in Dechloromonas aromatica (strain RCB).